We begin with the raw amino-acid sequence, 587 residues long: ATP-dependent lipid A-core flippase (587 aa).

5 consecutive transmembrane segments (helical) span residues 31 to 51 (LIVS…LIYL), 68 to 88 (LKMM…TNFI), 145 to 165 (GSLI…AVMF), 166 to 186 (YTSW…AVLI), and 259 to 279 (VQVI…TPLI). The ABC transmembrane type-1 domain maps to 32–315 (IVSGVALVFN…LTAVNAQFQS (284 aa)). In terms of domain architecture, ABC transporter spans 347–583 (LEFKNVSFAY…NGAYKQLHSM (237 aa)). 381-388 (GRSGSGKS) contacts ATP.

It belongs to the ABC transporter superfamily. Lipid exporter (TC 3.A.1.106) family. Homodimer.

Its subcellular location is the cell inner membrane. The catalysed reaction is ATP + H2O + lipid A-core oligosaccharideSide 1 = ADP + phosphate + lipid A-core oligosaccharideSide 2.. In terms of biological role, involved in lipopolysaccharide (LPS) biosynthesis. Translocates lipid A-core from the inner to the outer leaflet of the inner membrane. Transmembrane domains (TMD) form a pore in the inner membrane and the ATP-binding domain (NBD) is responsible for energy generation. The chain is ATP-dependent lipid A-core flippase from Haemophilus influenzae (strain ATCC 51907 / DSM 11121 / KW20 / Rd).